An 827-amino-acid polypeptide reads, in one-letter code: Multiple RNA-binding domain-containing protein 1 (827 aa).

In terms of domain architecture, RRM 1 spans 5–78; it reads SRIFVKNLPP…SRISVDIAKP (74 aa). Disordered stretches follow at residues 77–116, 176–230, and 256–299; these read KPIADSKPQHKSPSKGSSKDADPKNAPKVLPPNTKVTAAA, AGLE…ATDD, and AASG…DPES. Residues 179–189 are compositionally biased toward acidic residues; it reads EDGESDDEYED. 2 stretches are compositionally biased toward low complexity: residues 208–225 and 256–270; these read APLAASAEPSESAPPVSL and AASGSAAVSVPSTSV. Positions 277-288 are enriched in basic and acidic residues; the sequence is KPEEHPAEDSRE. RRM domains lie at 308–384, 489–560, 599–682, and 704–781; these read SRLF…PAAA, TTIL…KGPK, SSLF…ASHR, and TKLV…FAQA.

Belongs to the RRM MRD1 family.

It is found in the nucleus. In terms of biological role, involved in pre-rRNA processing. The protein is Multiple RNA-binding domain-containing protein 1 (mrd-1) of Neurospora crassa (strain ATCC 24698 / 74-OR23-1A / CBS 708.71 / DSM 1257 / FGSC 987).